A 414-amino-acid chain; its full sequence is uncharacterized protein (414 aa).

Disordered stretches follow at residues 136–168, 298–322, and 350–382; these read SSKSMAPTAEKELEKPLENGSELQEGDSLTVPT, KNFPDSGMRRAVQTPSPQNKMSYHR, and PPHSRPMHGSYNKVHVNKEPKPNLSPDKYMSTS.

This is an uncharacterized protein from Macaca fascicularis (Crab-eating macaque).